Consider the following 173-residue polypeptide: Cyclic pyranopterin monophosphate synthase (173 aa).

Substrate is bound by residues 75–77 and 117–118; these read MCH and ME. D132 is a catalytic residue. The segment at 152–173 is disordered; it reads SGGKSGHYQRENSSVGGFANEQ. The span at 162–173 shows a compositional bias: polar residues; sequence ENSSVGGFANEQ.

Belongs to the MoaC family. Homohexamer; trimer of dimers.

It catalyses the reaction (8S)-3',8-cyclo-7,8-dihydroguanosine 5'-triphosphate = cyclic pyranopterin phosphate + diphosphate. The protein operates within cofactor biosynthesis; molybdopterin biosynthesis. In terms of biological role, catalyzes the conversion of (8S)-3',8-cyclo-7,8-dihydroguanosine 5'-triphosphate to cyclic pyranopterin monophosphate (cPMP). The chain is Cyclic pyranopterin monophosphate synthase from Geobacillus sp. (strain WCH70).